The chain runs to 118 residues: MARIAGVNIPNHQHAVIALTAIYGIGRTTSGKICEAAGIAQTSKIKDLSEAEMERLREGVSKFTVEGDLRREVTMNIKRLMDLGCYRGFRHRKGLPVRGQRTRTNARTRKGPRKAIKK.

The segment at 94 to 118 is disordered; it reads GLPVRGQRTRTNARTRKGPRKAIKK.

This sequence belongs to the universal ribosomal protein uS13 family. Part of the 30S ribosomal subunit. Forms a loose heterodimer with protein S19. Forms two bridges to the 50S subunit in the 70S ribosome.

In terms of biological role, located at the top of the head of the 30S subunit, it contacts several helices of the 16S rRNA. In the 70S ribosome it contacts the 23S rRNA (bridge B1a) and protein L5 of the 50S subunit (bridge B1b), connecting the 2 subunits; these bridges are implicated in subunit movement. Contacts the tRNAs in the A and P-sites. This Thiobacillus denitrificans (strain ATCC 25259 / T1) protein is Small ribosomal subunit protein uS13.